A 490-amino-acid polypeptide reads, in one-letter code: MDAFVVLVFILSCLFLLSLWRQSSERGKLPPGPTPLPIIGNFLQIDVKDISGSLTNFSKVYGPVFTLYLGMKPTVVLHGYEAVKEALIDHGEEFAGRGSFPVAERVNKGLGIVFSNGSRWKETRRFSLMTLRNLGMGKRSIEDRVQEEAQCLVEELRKTNGSPCDPTFILGCAPCNVICSIIFQNRFDYKDKDFLTFMKKLNENARILSSPWFQVCNNFPLLIDYCPGSHHRITKNINYIRSYLSEKMKEHQESLDVANPRDFIDYYLIKLKQGNYNQQSEFSPENLATTVSDLFAAGTETTSTTLRYALLLLLKHPHVTAKVQEEIDQVVGRHRNPCMQDRSHMPYTDAMIHEVQRFIDLIPTNLPHAVTCDIKFRDYFIPKGTTIITSLSSVLHDSKEFPNPEVFDPGHFLDKNGNFKKSDYFMPFSTGKRMCAGEGLARMELFLFLTTILQNFKLKSLVHPKDIDTTPVLNGFASLPPSYQLCFIPV.

Residue cysteine 435 coordinates heme.

It belongs to the cytochrome P450 family. The cofactor is heme.

Its subcellular location is the endoplasmic reticulum membrane. The protein localises to the microsome membrane. The catalysed reaction is an organic molecule + reduced [NADPH--hemoprotein reductase] + O2 = an alcohol + oxidized [NADPH--hemoprotein reductase] + H2O + H(+). In terms of biological role, catalyzes the hydroxylation of tolbutamide and the N-demethylation of aminopyrine and benzphetamine. The chain is Cytochrome P450 2C26 (CYP2C26) from Mesocricetus auratus (Golden hamster).